The chain runs to 407 residues: S-adenosylmethionine synthase (407 aa).

Position 19 (histidine 19) interacts with ATP. Aspartate 21 is a Mg(2+) binding site. Glutamate 47 serves as a coordination point for K(+). The L-methionine site is built by glutamate 60 and glutamine 103. The segment at 103–113 (QSQEIADGVDN) is flexible loop. Residues 107-134 (IADGVDNSDEARTNGDVEEDDRAGAGDQ) form a disordered region. ATP contacts are provided by residues 178–180 (DGK), aspartate 258, 264–265 (RK), alanine 281, and lysine 285. An L-methionine-binding site is contributed by aspartate 258. Lysine 289 serves as a coordination point for L-methionine.

Belongs to the AdoMet synthase family. As to quaternary structure, homotetramer; dimer of dimers. Requires Mg(2+) as cofactor. K(+) serves as cofactor.

Its subcellular location is the cytoplasm. The enzyme catalyses L-methionine + ATP + H2O = S-adenosyl-L-methionine + phosphate + diphosphate. The protein operates within amino-acid biosynthesis; S-adenosyl-L-methionine biosynthesis; S-adenosyl-L-methionine from L-methionine: step 1/1. Catalyzes the formation of S-adenosylmethionine (AdoMet) from methionine and ATP. The overall synthetic reaction is composed of two sequential steps, AdoMet formation and the subsequent tripolyphosphate hydrolysis which occurs prior to release of AdoMet from the enzyme. The polypeptide is S-adenosylmethionine synthase (Corynebacterium glutamicum (strain ATCC 13032 / DSM 20300 / JCM 1318 / BCRC 11384 / CCUG 27702 / LMG 3730 / NBRC 12168 / NCIMB 10025 / NRRL B-2784 / 534)).